A 905-amino-acid polypeptide reads, in one-letter code: MKKRIDYLSNKQNKYSIRRFTVGTTSVIVGATILFGIGNHQAQASEQSNDTTQSSKNNASADSEKNNMIETPQLNTTANDTSDISANTNSANVDSTAKPMSTQTSNTTTTEPASTNETPQLTAIKDQATAAKMQDQTVPQEANSQVDNKTTNDANSIATNSELKNPQTLDLPQSSPQTISNAQGTSKPSVRTRAVRSLAVAEPVVNAADAKGTNVNDKVTAKDFQLEKTTFDPNQSGNTFMAANFTVTGQVKSGDYFTAKLPDSVTGNGDVDYSNSNNTMPIADIVNDKNEVVAKATYDILTKTYTFVFTDYVNDKQNINGKFSLPLFTDRAKAPKSGTYDANINIADEMFNNKITYNYSSPIAGIDKPNGANISSQIIGVDTASGQNTYKQTVFVNPKQRVLGNTWVYIKGYQDKIEESSGKVSATDTKLRIFEVNDTSKLSDSYYADPNDSNLKEVTDQFKDKITYKYQNVASINFGDINKTYVVLVEGHYDKTGKNLKTQVIQENVDPATGKDYSIFGWNNENVVRYGGGSADGDSAVNPKDPTPGPPVDPEPSPDPEPEPSPDPDPEPTPDPEPSPDPDPDSDSDSDSGSDSDSDSDSDSDSDSDSGSDSDSDSDSDSESDSESDSDSDSESDSDSDSDSESDSDSDSDSDSDSDSDSDSDSDSDSDSDSDSDSDSDSESDSDSDSDSESDSDSDSDSDSDSDSDSDSDSDSDSDSDSDSDSDSESDSDSDSDSDSDSDSDSDSDSDSDSDSDSDSDSDSDSESDSDSDSDSDSDSDSDSDSDSDSDSDSDSDSDSESDSDSDSDSDSDSDSDSDSDSDSDSDSDSDSRVTPPNNEQKAPSNPKGEVNHSNKVSKQHKTDALPETGDKSENTNATLFGAMMALLGSLLLFRKRKQDHKEKA.

Positions 1 to 44 (MKKRIDYLSNKQNKYSIRRFTVGTTSVIVGATILFGIGNHQAQA) are cleaved as a signal peptide. Residues 15 to 26 (YSIRRFTVGTTS) carry the YSIRK-G/S signaling motif motif. Composition is skewed to polar residues over residues 44–61 (ASEQ…NASA) and 68–101 (MIET…KPMS). The interval 44–191 (ASEQSNDTTQ…AQGTSKPSVR (148 aa)) is disordered. A ligand binding A region region spans residues 45–542 (SEQSNDTTQS…GSADGDSAVN (498 aa)). Over residues 102–119 (TQTSNTTTTEPASTNETP) the composition is skewed to low complexity. Residues 134 to 189 (QDQTVPQEANSQVDNKTTNDANSIATNSELKNPQTLDLPQSSPQTISNAQGTSKPS) are compositionally biased toward polar residues. Residues 272–276 (DYSNS) carry the MIDAS-like motif motif. Residues 530–877 (YGGGSADGDS…ETGDKSENTN (348 aa)) are disordered. Residues 545 to 555 (DPTPGPPVDPE) are compositionally biased toward pro residues. The segment covering 556-829 (PSPDPEPEPS…SDSDSDSDSD (274 aa)) has biased composition (acidic residues). Polar residues predominate over residues 833–844 (RVTPPNNEQKAP). The span at 861–874 (HKTDALPETGDKSE) shows a compositional bias: basic and acidic residues. The LPXTG sorting signal signature appears at 866-870 (LPETG). Position 869 is a pentaglycyl murein peptidoglycan amidated threonine (threonine 869). A propeptide spans 870–905 (GDKSENTNATLFGAMMALLGSLLLFRKRKQDHKEKA) (removed by sortase).

This sequence belongs to the serine-aspartate repeat-containing protein (SDr) family. Proteolytically cleaved by aureolysin (aur). This cleavage leads to the inactivation of ClfB.

The protein localises to the secreted. It localises to the cell wall. Cell surface-associated protein implicated in virulence by promoting bacterial attachment to both alpha- and beta-chains of human fibrinogen and inducing the formation of bacterial clumps. This chain is Clumping factor B (clfB), found in Staphylococcus aureus (strain MSSA476).